Reading from the N-terminus, the 88-residue chain is Small ribosomal subunit protein bS20 (88 aa).

It belongs to the bacterial ribosomal protein bS20 family.

Functionally, binds directly to 16S ribosomal RNA. This Rhodopseudomonas palustris (strain BisA53) protein is Small ribosomal subunit protein bS20.